Consider the following 568-residue polypeptide: MQKILIEGYDISKDNANPDIKEIRNLDHLPSAKACEYFIHAHGAEFFYQNSHLGLLGKIQSYFMPDPSYLSLTMSSNGGATPMLDITLLNKIQRNTPANQCNIVHIFSCCSGAAQHHLDFIEGNIVLCTYNKASDNNVTQLANSNYETRIKKHSSLIEYIHDNFHLLVASDFSISYKLDNEIYNFSLSSDNIKNMKSIEELPVFLYKEYGTFVKFYQNIYAKYHVSYPEIFNISIGTKPKGLTYADLVRVFTRALTLETYNFNKFSLSKIENLLHQKGLNTDFSVDQAIEQENFELLTSLLNYDNTNIQFYTINKTIDKGNLDILKAVVAHSTTKIESYNIDRAIDKGNLDILKAVVAHSTTKIESYNIDRAIDKGNLDILKAVVAHSTTKIESYNIDRAIDKGNLDILKAVVAHSTTKIESYNIDRAIDKGNLDILKAVVAHSTTKIESYNIDRAIDKGNLDILKAVVAHSTTKIESYNIDRAIDKGNLDILKAVVAHSTTKIESYNFNTVIKIGNLEMLDIILQHSYNSEELVTKYHNYTINNIMPEVNTIPTIEEDVSILGAEIV.

This is an uncharacterized protein from Rickettsia prowazekii (strain Madrid E).